A 565-amino-acid polypeptide reads, in one-letter code: Probable alpha-L-arabinofuranosidase A (565 aa).

The first 19 residues, 1–19, serve as a signal peptide directing secretion; it reads MPLSAAIKSSLSVSVRADA. N-linked (GlcNAc...) asparagine glycans are attached at residues Asn71, Asn91, Asn128, Asn303, Asn362, Asn486, and Asn501.

It belongs to the glycosyl hydrolase 51 family.

It localises to the secreted. The catalysed reaction is Hydrolysis of terminal non-reducing alpha-L-arabinofuranoside residues in alpha-L-arabinosides.. It participates in glycan metabolism; L-arabinan degradation. In terms of biological role, alpha-L-arabinofuranosidase involved in the degradation of arabinoxylan, a major component of plant hemicellulose. Acts only on small linear 1,5-alpha-linked L-arabinofuranosyl oligosaccharides. In Emericella nidulans (strain FGSC A4 / ATCC 38163 / CBS 112.46 / NRRL 194 / M139) (Aspergillus nidulans), this protein is Probable alpha-L-arabinofuranosidase A (abfA).